The chain runs to 808 residues: Phenylalanine--tRNA ligase beta subunit (808 aa).

A tRNA-binding domain is found at 40 to 149 (RPELDFVKIV…DQAEVGKTIR (110 aa)). The region spanning 407 to 484 (HKEVRIHTDI…RTKGYDTIQV (78 aa)) is the B5 domain. The Mg(2+) site is built by aspartate 462, aspartate 468, glutamate 471, and glutamate 472. The FDX-ACB domain maps to 716-808 (SQFPEAEIDL…LAGKNGFVLR (93 aa)).

It belongs to the phenylalanyl-tRNA synthetase beta subunit family. Type 1 subfamily. As to quaternary structure, tetramer of two alpha and two beta subunits. Requires Mg(2+) as cofactor.

It is found in the cytoplasm. The enzyme catalyses tRNA(Phe) + L-phenylalanine + ATP = L-phenylalanyl-tRNA(Phe) + AMP + diphosphate + H(+). This is Phenylalanine--tRNA ligase beta subunit from Leptospira interrogans serogroup Icterohaemorrhagiae serovar copenhageni (strain Fiocruz L1-130).